A 111-amino-acid polypeptide reads, in one-letter code: Flagellar hook-basal body complex protein FliE (111 aa).

It belongs to the FliE family.

It localises to the bacterial flagellum basal body. The chain is Flagellar hook-basal body complex protein FliE from Brucella ovis (strain ATCC 25840 / 63/290 / NCTC 10512).